Here is a 628-residue protein sequence, read N- to C-terminus: tRNA uridine 5-carboxymethylaminomethyl modification enzyme MnmG (628 aa).

Residue 13–18 (GAGHAG) coordinates FAD. 273-287 (GPRYCPSIEDKIVRF) contributes to the NAD(+) binding site.

It belongs to the MnmG family. Homodimer. Heterotetramer of two MnmE and two MnmG subunits. FAD serves as cofactor.

Its subcellular location is the cytoplasm. NAD-binding protein involved in the addition of a carboxymethylaminomethyl (cmnm) group at the wobble position (U34) of certain tRNAs, forming tRNA-cmnm(5)s(2)U34. This chain is tRNA uridine 5-carboxymethylaminomethyl modification enzyme MnmG, found in Buchnera aphidicola subsp. Acyrthosiphon pisum (strain Tuc7).